The primary structure comprises 184 residues: NADH-quinone oxidoreductase subunit B (184 aa).

Residues cysteine 63, cysteine 64, cysteine 128, and cysteine 158 each coordinate [4Fe-4S] cluster.

Belongs to the complex I 20 kDa subunit family. As to quaternary structure, NDH-1 is composed of 14 different subunits. Subunits NuoB, C, D, E, F, and G constitute the peripheral sector of the complex. [4Fe-4S] cluster is required as a cofactor.

It is found in the cell inner membrane. The catalysed reaction is a quinone + NADH + 5 H(+)(in) = a quinol + NAD(+) + 4 H(+)(out). In terms of biological role, NDH-1 shuttles electrons from NADH, via FMN and iron-sulfur (Fe-S) centers, to quinones in the respiratory chain. Couples the redox reaction to proton translocation (for every two electrons transferred, four hydrogen ions are translocated across the cytoplasmic membrane), and thus conserves the redox energy in a proton gradient. The sequence is that of NADH-quinone oxidoreductase subunit B from Xylella fastidiosa (strain 9a5c).